The sequence spans 204 residues: Large ribosomal subunit protein eL15 (204 aa).

G2 carries the N-myristoyl glycine lipid modification. S34 carries the phosphoserine modification. K83 is covalently cross-linked (Glycyl lysine isopeptide (Lys-Gly) (interchain with G-Cter in SUMO2)). Residues S97 and S100 each carry the phosphoserine modification. Residues 165 to 186 (TSAGRKSRGLGKGHKFHHTIGG) are disordered. The segment covering 169–182 (RKSRGLGKGHKFHH) has biased composition (basic residues).

The protein belongs to the eukaryotic ribosomal protein eL15 family. In terms of assembly, component of the large ribosomal subunit. Interacts with IFIT1 (via TPR repeats 1-4).

Its subcellular location is the cytoplasm. Its function is as follows. Component of the large ribosomal subunit. The ribosome is a large ribonucleoprotein complex responsible for the synthesis of proteins in the cell. The sequence is that of Large ribosomal subunit protein eL15 (RPL15) from Bos taurus (Bovine).